Here is a 740-residue protein sequence, read N- to C-terminus: MARPRHLRGLGMCITAVLASFIAGFTVGWFIKPLKETTTSAGYHQSIQQKLLSEMKAENIRSFLRSFTKLPHLAGTEQNLLLAKKIQTQWKKFGLDSANLVHYDVLLSYPNETNANYVSIVDEHGVEIFKTSYLEPPPDGYENVTNIIPPYNAFSASGMPEGELVYVNYARTEDFFKLEREMNINCTGKIVIARYGKIFRGNKVKNAMLAGAMGIILYSDPADYFAPDVQPYPKGWNLPGAAAQRGNVLNLNGAGDPLTPGYPAKEYTFRLPVEEAVGIPNIPVHPIGYNDAERLLRNLGGAAPPDKSWKGSLNVSYNIGPGFTGSEYSRNIRMHVNNINKITRIYNVIGTIRGSTEPDRYVILGGHRDSWVFGGIDPTTGTAVLQEIARSFGKLVNGGWRPRRTIIFASWDAEEFGLLGSTEWAEENAKLLQERSIAYINSDSAIEGNYTLRVDCTPLLNQLVYKVAREISSPDDGFESKSLYESWLEKDPSPENKECPRINKLGSGSDFEAYFQRLGIASGRARYTKNKKTDKYSSYPVYHTIYETFELVQNFYDPTFKKQLSVAQLRGALVYELADSVVIPFNIQDYAKALKNYAASIFNISKKHDQQLRNHAVSFDPLFSAVKNFSEAASDFHRRLTQVDLNNPIAVRIMNDQQMLLERAFIDPLGLPGRKFYRHIIFAPSSHNKYAGESFPGIYDAMFDIENKADPSLAWAEVKKHISIAAFTIQAAAGTLTNVL.

Residues Met1 to Leu7 are Cytoplasmic-facing. The chain crosses the membrane as a helical; Signal-anchor for type II membrane protein span at residues Arg8–Ile31. The Extracellular portion of the chain corresponds to Lys32–Leu740. N-linked (GlcNAc...) asparagine glycans are attached at residues Asn111, Asn143, and Asn185. Substrate contacts are provided by Arg200 and Asn247. Ca(2+) is bound by residues Thr259 and Tyr262. The interval Ala264 to Leu577 is NAALADase. Asn314 is a glycosylation site (N-linked (GlcNAc...) asparagine). 2 residues coordinate Zn(2+): His367 and Asp377. Glu414 is a binding site for substrate. The active-site Nucleophile; for NAALADase activity is Glu414. Glu415 contributes to the Zn(2+) binding site. Ca(2+)-binding residues include Glu423 and Glu426. Zn(2+) is bound at residue Asp443. Asn449 carries N-linked (GlcNAc...) asparagine glycosylation. Residues Ser507–Gly508, Arg524–Arg526, Tyr542, and Tyr542–His543 contribute to the substrate site. His543 is a binding site for Zn(2+). Asn603 carries an N-linked (GlcNAc...) asparagine glycan. Residue Ser618 is the Charge relay system of the active site. N-linked (GlcNAc...) asparagine glycosylation occurs at Asn628. Catalysis depends on charge relay system residues Asp656 and His679. Residue Lys689–Tyr690 coordinates substrate.

The protein belongs to the peptidase M28 family. M28B subfamily. Homodimer. It depends on Zn(2+) as a cofactor. In terms of tissue distribution, expressed ovary, testes and lung, but not brain.

The protein localises to the cell membrane. It carries out the reaction Release of an unsubstituted, C-terminal glutamyl residue, typically from Ac-Asp-Glu or folylpoly-gamma-glutamates.. Functionally, has N-acetylated-alpha-linked-acidic dipeptidase (NAALADase) activity. Also exhibits a dipeptidyl-peptidase IV type activity. Inactivates the peptide neurotransmitter N-acetylaspartylglutamate. The protein is N-acetylated-alpha-linked acidic dipeptidase 2 (Naalad2) of Mus musculus (Mouse).